Here is a 975-residue protein sequence, read N- to C-terminus: MATGLGEPVYGLSEDEGESRILRVKVVSGIDLAKKDIFGASDPYVKLSLYVADENRELALVQTKTIKKTLNPKWNEEFYFRVNPSNHRLLFEVFDENRLTRDDFLGQVDVPLSHLPTEDPTMERPYTFKDFLLRPRSHKSRVKGFLRLKMAYMPKNGGQDEENSDQRDDMEHGWEVVDSNDSASQHQEELPPPPLPPGWEEKVDNLGRTYYVNHNNRTTQWHRPSLMDVSSESDNNIRQINQEAAHRRFRSRRHISEDLEPEPSEGGDVPEPWETISEEVNIAGDSLGLALPPPPASPGSRTSPQELSEELSRRLQITPDSNGEQFSSLIQREPSSRLRSCSVTDAVAEQGHLPPPSAPAGRARSSTVTGGEEPTPSVAYVHTTPGLPSGWEERKDAKGRTYYVNHNNRTTTWTRPIMQLAEDGASGSATNSNNHLIEPQIRRPRSLSSPTVTLSAPLEGAKDSPVRRAVKDTLSNPQSPQPSPYNSPKPQHKVTQSFLPPGWEMRIAPNGRPFFIDHNTKTTTWEDPRLKFPVHMRSKTSLNPNDLGPLPPGWEERIHLDGRTFYIDHNSKITQWEDPRLQNPAITGPAVPYSREFKQKYDYFRKKLKKPADIPNRFEMKLHRNNIFEESYRRIMSVKRPDVLKARLWIEFESEKGLDYGGVAREWFFLLSKEMFNPYYGLFEYSATDNYTLQINPNSGLCNEDHLSYFTFIGRVAGLAVFHGKLLDGFFIRPFYKMMLGKQITLNDMESVDSEYYNSLKWILENDPTELDLMFCIDEENFGQTYQVDLKPNGSEIMVTNENKREYIDLVIQWRFVNRVQKQMNAFLEGFTELLPIDLIKIFDENELELLMCGLGDVDVNDWRQHSIYKNGYCPNHPVIQWFWKAVLLMDAEKRIRLLQFVTGTSRVPMNGFAELYGSNGPQLFTIEQWGSPEKLPRAHTCFNRLDLPPYETFEDLREKLLMAVENAQGFEGVD.

N-acetylalanine is present on Ala-2. Residues 4–126 form the C2 domain; that stretch reads GLGEPVYGLS…TEDPTMERPY (123 aa). 3 disordered regions span residues 178–202, 244–272, and 285–312; these read DSNDSASQHQEELPPPPLPPGWEEK, AAHRRFRSRRHISEDLEPEPSEGGDVPEP, and DSLGLALPPPPASPGSRTSPQELSEELS. Positions 193–226 constitute a WW 1 domain; sequence PPLPPGWEEKVDNLGRTYYVNHNNRTTQWHRPSL. Phosphoserine is present on Ser-312. At Thr-318 the chain carries Phosphothreonine. Ser-342 is modified (phosphoserine; by WNK1 and WNK4). Disordered regions lie at residues 349 to 393 and 424 to 496; these read EQGH…GWEE and GASG…KVTQ. Thr-367 is subject to Phosphothreonine; by SGK1. The region spanning 385–418 is the WW 2 domain; it reads PGLPSGWEERKDAKGRTYYVNHNNRTTTWTRPIM. Ser-446 carries the phosphoserine modification. Ser-448 is subject to Phosphoserine; by PKA and SGK1. Position 449 is a phosphoserine; by WNK1 and WNK4 (Ser-449). Over residues 460-471 the composition is skewed to basic and acidic residues; it reads GAKDSPVRRAVK. Phosphoserine occurs at positions 464, 475, 479, 483, and 487. WW domains are found at residues 497–530 and 548–581; these read SFLPPGWEMRIAPNGRPFFIDHNTKTTTWEDPRL and GPLPPGWEERIHLDGRTFYIDHNSKITQWEDPRL. In terms of domain architecture, HECT spans 640 to 974; the sequence is RPDVLKARLW…VENAQGFEGV (335 aa). Cys-942 serves as the catalytic Glycyl thioester intermediate.

As to quaternary structure, interacts with UBE2E3. Interacts with NDFIP1; this interaction activates the E3 ubiquitin-protein ligase. Interacts with NDFIP2; this interaction activates the E3 ubiquitin-protein ligase. Interacts (via WW domains) with SCN1A. Interacts (via WW domains) with SCN2A. Interacts (via WW domains) with SCN3A. Interacts (via WW domains) with SCN5A. Interacts (via WW domains) with SCN8A. Interacts (via WW domains) with SCN9A. Interacts (via WW domains) with SCN10A. Interacts (via WW domains) with CLCN5. Interacts with SMAD2. Interacts with SMAD3. Interacts with SMAD6. Interacts with SMAD7. The phosphorylated form interacts with 14-3-3 proteins. Interacts with TNK2. Interacts with WNK1. Interacts with SGK1. Interacts (via C2 domain) with NPC2. Interacts with ARRDC4. Interacts with KCNQ1; promotes internalization of KCNQ1. Interacts (via domains WW1, 3 and 4) with USP36; the interaction inhibits ubiquitination of, at least, NTRK1, KCNQ2 and KCNQ3 by NEDD4L. Interacts with PRRG4 (via cytoplasmic domain). Interacts with LDLRAD3; the interaction is direct. Interacts with UBE2D2. Interacts with TTYH2 and TTYH3. In terms of assembly, (Microbial infection) Interacts with Epstein-Barr virus LMP2A. Phosphorylated by SGK1 or PKA; which impairs interaction with SCNN. Interaction with YWHAH inhibits dephosphorylation. Post-translationally, auto-ubiquitinated. Deubiquitinated by USP36, no effect on NEDD4L protein levels. Both proteins interact and regulate each other's ubiquitination levels. As to expression, ubiquitously expressed, with highest levels in prostate, pancreas, and kidney. Expressed in melanocytes.

The protein localises to the cytoplasm. It is found in the golgi apparatus. The protein resides in the endosome. Its subcellular location is the multivesicular body. It catalyses the reaction S-ubiquitinyl-[E2 ubiquitin-conjugating enzyme]-L-cysteine + [acceptor protein]-L-lysine = [E2 ubiquitin-conjugating enzyme]-L-cysteine + N(6)-ubiquitinyl-[acceptor protein]-L-lysine.. It carries out the reaction [E2 ubiquitin-conjugating enzyme]-S-ubiquitinyl-L-cysteine + [acceptor protein]-L-cysteine = [E2 ubiquitin-conjugating enzyme]-L-cysteine + [acceptor protein]-S-ubiquitinyl-L-cysteine.. Its pathway is protein modification; protein ubiquitination. Its activity is regulated as follows. Activated by NDFIP1- and NDFIP2-binding. Its function is as follows. E3 ubiquitin-protein ligase that mediates the polyubiquitination of lysine and cysteine residues on target proteins and is thereby implicated in the regulation of various signaling pathways including autophagy, innate immunity or DNA repair. Inhibits TGF-beta signaling by triggering SMAD2 and TGFBR1 ubiquitination and proteasome-dependent degradation. Downregulates autophagy and cell growth by ubiquitinating and reducing cellular ULK1 or ASCT2 levels. Promotes ubiquitination and internalization of various plasma membrane channels such as ENaC, SCN2A/Nav1.2, SCN3A/Nav1.3, SCN5A/Nav1.5, SCN9A/Nav1.7, SCN10A/Nav1.8, KCNA3/Kv1.3, KCNH2, EAAT1, KCNQ2/Kv7.2, KCNQ3/Kv7.3 or CLC5. Promotes ubiquitination and degradation of SGK1 and TNK2. Ubiquitinates BRAT1 and this ubiquitination is enhanced in the presence of NDFIP1. Plays a role in dendrite formation by melanocytes. Involved in the regulation of TOR signaling. Ubiquitinates and regulates protein levels of NTRK1 once this one is activated by NGF. Plays a role in antiviral innate immunity by catalyzing 'Lys-29'-linked cysteine ubiquitination of TRAF3, resulting in enhanced 'Lys-48' and 'Lys-63'-linked ubiquitination of TRAF3. Ubiquitinates TTYH2 and TTYH3 and regulates protein levels of TTYH2. The polypeptide is E3 ubiquitin-protein ligase NEDD4-like (Homo sapiens (Human)).